A 534-amino-acid chain; its full sequence is Major facilitator-type transporter sor6 (534 aa).

N-linked (GlcNAc...) asparagine glycosylation is found at asparagine 29 and asparagine 36. A run of 12 helical transmembrane segments spans residues 66–86 (WFLT…SSAY), 103–123 (LFIT…AVWG), 160–180 (AMVA…LIVL), 182–202 (FLAG…IADL), 209–229 (GLAM…GPIV), 241–261 (WVQG…VIFV), 318–338 (IVLI…MFLG), 354–374 (FGGL…GYAI), 395–415 (LPPA…FAWT), 424–444 (VSIV…LPIV), 456–476 (ASVL…FPLF), and 486–506 (IHWA…FPFF).

This sequence belongs to the major facilitator superfamily. Sugar transporter (TC 2.A.1.1) family.

It localises to the membrane. Functionally, major facilitator-type transporter; part of the gene cluster that mediates the biosynthesis of sorbicillinoids, a diverse group of yellow secondary metabolites that restrict growth of competing pathogenic fungi but not of bacteria. In Hypocrea jecorina (strain QM6a) (Trichoderma reesei), this protein is Major facilitator-type transporter sor6.